The sequence spans 461 residues: UDP-N-acetylmuramoylalanine--D-glutamate ligase (461 aa).

117-123 (GTNGKTT) contributes to the ATP binding site.

It belongs to the MurCDEF family.

It localises to the cytoplasm. The enzyme catalyses UDP-N-acetyl-alpha-D-muramoyl-L-alanine + D-glutamate + ATP = UDP-N-acetyl-alpha-D-muramoyl-L-alanyl-D-glutamate + ADP + phosphate + H(+). The protein operates within cell wall biogenesis; peptidoglycan biosynthesis. Cell wall formation. Catalyzes the addition of glutamate to the nucleotide precursor UDP-N-acetylmuramoyl-L-alanine (UMA). This is UDP-N-acetylmuramoylalanine--D-glutamate ligase from Synechococcus sp. (strain CC9605).